The chain runs to 262 residues: Glutamate racemase (262 aa).

Residues 5–6 (DS) and 37–38 (YG) contribute to the substrate site. The Proton donor/acceptor role is filled by C69. Residue 70–71 (NT) coordinates substrate. C181 functions as the Proton donor/acceptor in the catalytic mechanism. 182 to 183 (TH) lines the substrate pocket.

The protein belongs to the aspartate/glutamate racemases family.

It catalyses the reaction L-glutamate = D-glutamate. It functions in the pathway cell wall biogenesis; peptidoglycan biosynthesis. Functionally, provides the (R)-glutamate required for cell wall biosynthesis. This chain is Glutamate racemase, found in Buchnera aphidicola subsp. Acyrthosiphon pisum (strain Tuc7).